Here is a 179-residue protein sequence, read N- to C-terminus: Small ribosomal subunit protein uS5 (179 aa).

The region spanning 22–85 is the S5 DRBM domain; the sequence is MIEKLVAVNR…EYARKRMSNV (64 aa).

Belongs to the universal ribosomal protein uS5 family. Part of the 30S ribosomal subunit. Contacts proteins S4 and S8.

In terms of biological role, with S4 and S12 plays an important role in translational accuracy. Its function is as follows. Located at the back of the 30S subunit body where it stabilizes the conformation of the head with respect to the body. This Xylella fastidiosa (strain M23) protein is Small ribosomal subunit protein uS5.